Reading from the N-terminus, the 211-residue chain is Large ribosomal subunit protein uL3 (211 aa).

Residues 125-148 (GPASHGSKKWHRRPGSIGQRKTPG) are disordered.

It belongs to the universal ribosomal protein uL3 family. In terms of assembly, part of the 50S ribosomal subunit. Forms a cluster with proteins L14 and L19. Also contacts proteins L13 and L17.

In terms of biological role, one of the primary rRNA binding proteins, it binds directly near the 3'-end of the 23S rRNA, where it nucleates assembly of the 50S subunit. The chain is Large ribosomal subunit protein uL3 (rplC) from Deinococcus radiodurans (strain ATCC 13939 / DSM 20539 / JCM 16871 / CCUG 27074 / LMG 4051 / NBRC 15346 / NCIMB 9279 / VKM B-1422 / R1).